Reading from the N-terminus, the 296-residue chain is Formylmethanofuran--tetrahydromethanopterin formyltransferase-like protein (296 aa).

Belongs to the FTR family.

The sequence is that of Formylmethanofuran--tetrahydromethanopterin formyltransferase-like protein (ehaS) from Methanothermobacter marburgensis (strain ATCC BAA-927 / DSM 2133 / JCM 14651 / NBRC 100331 / OCM 82 / Marburg) (Methanobacterium thermoautotrophicum).